The following is a 454-amino-acid chain: tRNA modification GTPase MnmE (454 aa).

Arg-23, Glu-80, and Lys-120 together coordinate (6S)-5-formyl-5,6,7,8-tetrahydrofolate. The TrmE-type G domain occupies 216 to 377; that stretch reads GMKVVIAGRP…LRNHLKQSMG (162 aa). K(+) is bound at residue Asn-226. GTP is bound by residues 226 to 231, 245 to 251, 270 to 273, 335 to 338, and 358 to 360; these read NAGKSS, TDIAGTT, DTAG, NKAD, and SAR. Mg(2+) is bound at residue Ser-230. Positions 245, 247, and 250 each coordinate K(+). Position 251 (Thr-251) interacts with Mg(2+). (6S)-5-formyl-5,6,7,8-tetrahydrofolate is bound at residue Lys-454.

It belongs to the TRAFAC class TrmE-Era-EngA-EngB-Septin-like GTPase superfamily. TrmE GTPase family. As to quaternary structure, homodimer. Heterotetramer of two MnmE and two MnmG subunits. The cofactor is K(+).

Its subcellular location is the cytoplasm. Its function is as follows. Exhibits a very high intrinsic GTPase hydrolysis rate. Involved in the addition of a carboxymethylaminomethyl (cmnm) group at the wobble position (U34) of certain tRNAs, forming tRNA-cmnm(5)s(2)U34. The sequence is that of tRNA modification GTPase MnmE from Escherichia coli (strain SMS-3-5 / SECEC).